A 182-amino-acid chain; its full sequence is Dipetalodipin (182 aa).

The first 18 residues, 1–18 (MKTIIAAIFLGILMHAFA), serve as a signal peptide directing secretion. 3 cysteine pairs are disulfide-bonded: cysteine 21–cysteine 134, cysteine 55–cysteine 181, and cysteine 87–cysteine 103.

This sequence belongs to the calycin superfamily. Triabin family. As to expression, expressed in salivary glands.

It is found in the secreted. Inhibits platelet aggregation, vasoconstriction, and angiogenesis through binding to distinct eicosanoids involved in inflammation (acts as a scavenger), and has a role in inhibiting host innate immunity by impairing platelet-assisted formation of neutrophil extracellular traps (NETs). Inhibits platelet aggregation by collagen (IC(50)=30 nM), thromboxane A2 mimetic (TXA2 mimetic), or arachidonic acid (AA) without affecting aggregation induced by ADP, convulxin (GP6 agonist), PMA, and ristocetin (vWF-dependent platelet agglutinator). Binds with high affinity to TXA2, TXB2, prostaglandine H2 mimetic (PGH2 mimetic), PGD2, PGJ2, and PGF2alpha. Also interacts with 15(S)-hydroxyeicosatetraenoic acid (HETE), being the first calycin/lipocalin described to date to bind to a derivative of 15-lipoxygenase. Binding is not observed to other prostaglandins, leukotrienes, HETEs, lipids, and biogenic amines. It prevents contraction of rat uterus stimulated by PGF2alpha and induces relaxation of aorta previously contracted with TXA2 mimetic. In addition, it inhibits angiogenesis mediated by 15(S)-HETE and does not enhance inhibition of collagen-induced platelet aggregation by SQ29548 (TXA2 antagonist) and indomethacin. Also impairs platelet-assisted formation of neutrophil extracellular traps (NETs). NETs are web-like structures of DNA and proteins that play an important role in killing of pathogens. In addition, NETs are implicated in thrombus formation. In vivo, this protein exhibits antithrombotic activity in two distinct mice models that are highly dependent on platelets. It is noteworthy that it inhibits thrombosis without promoting excessive bleeding. In Dipetalogaster maximus (Blood-sucking bug), this protein is Dipetalodipin.